The sequence spans 208 residues: Inactive ribonuclease-like protein 10 (208 aa).

Residues 1–24 form the signal peptide; sequence MKVTLVHLLFMMLLLLLGLGLGLG. Residues Asn125 and Asn147 are each glycosylated (N-linked (GlcNAc...) asparagine).

It belongs to the pancreatic ribonuclease family. The N-terminus is blocked. Glycosylated. As to expression, male-specific expression in proximal caput of the epididymis (at protein level).

The protein resides in the secreted. Secreted proximal epididymal protein required for post-testicular sperm maturation and male fertility. May be involved in sperm adhesion to the egg zona pellucida. Does not have ribonuclease activity. This is Inactive ribonuclease-like protein 10 (Rnase10) from Mus musculus (Mouse).